Here is a 204-residue protein sequence, read N- to C-terminus: Thiamine-phosphate synthase (204 aa).

4-amino-2-methyl-5-(diphosphooxymethyl)pyrimidine contacts are provided by residues 35–39 and N67; that span reads QVREK. 2 residues coordinate Mg(2+): D68 and D87. S106 is a 4-amino-2-methyl-5-(diphosphooxymethyl)pyrimidine binding site. 132–134 serves as a coordination point for 2-[(2R,5Z)-2-carboxy-4-methylthiazol-5(2H)-ylidene]ethyl phosphate; that stretch reads TPT. Residue K135 coordinates 4-amino-2-methyl-5-(diphosphooxymethyl)pyrimidine. Residues G163 and 183-184 each bind 2-[(2R,5Z)-2-carboxy-4-methylthiazol-5(2H)-ylidene]ethyl phosphate; that span reads VS.

It belongs to the thiamine-phosphate synthase family. Requires Mg(2+) as cofactor.

It catalyses the reaction 2-[(2R,5Z)-2-carboxy-4-methylthiazol-5(2H)-ylidene]ethyl phosphate + 4-amino-2-methyl-5-(diphosphooxymethyl)pyrimidine + 2 H(+) = thiamine phosphate + CO2 + diphosphate. The catalysed reaction is 2-(2-carboxy-4-methylthiazol-5-yl)ethyl phosphate + 4-amino-2-methyl-5-(diphosphooxymethyl)pyrimidine + 2 H(+) = thiamine phosphate + CO2 + diphosphate. The enzyme catalyses 4-methyl-5-(2-phosphooxyethyl)-thiazole + 4-amino-2-methyl-5-(diphosphooxymethyl)pyrimidine + H(+) = thiamine phosphate + diphosphate. Its pathway is cofactor biosynthesis; thiamine diphosphate biosynthesis; thiamine phosphate from 4-amino-2-methyl-5-diphosphomethylpyrimidine and 4-methyl-5-(2-phosphoethyl)-thiazole: step 1/1. In terms of biological role, condenses 4-methyl-5-(beta-hydroxyethyl)thiazole monophosphate (THZ-P) and 2-methyl-4-amino-5-hydroxymethyl pyrimidine pyrophosphate (HMP-PP) to form thiamine monophosphate (TMP). This chain is Thiamine-phosphate synthase, found in Vibrio parahaemolyticus serotype O3:K6 (strain RIMD 2210633).